A 375-amino-acid chain; its full sequence is uncharacterized protein (375 aa).

Lysine 99 participates in a covalent cross-link: Isoglutamyl lysine isopeptide (Lys-Gln) (interchain with Q-Cter in protein Pup).

The protein belongs to the IMPDH/GMPR family.

This is an uncharacterized protein from Mycolicibacterium smegmatis (strain ATCC 700084 / mc(2)155) (Mycobacterium smegmatis).